The sequence spans 392 residues: Methylthioribose-1-phosphate isomerase (392 aa).

Residue D268 is the Proton donor of the active site.

It belongs to the eIF-2B alpha/beta/delta subunits family. MtnA subfamily.

It localises to the cytoplasm. The protein localises to the nucleus. It carries out the reaction 5-(methylsulfanyl)-alpha-D-ribose 1-phosphate = 5-(methylsulfanyl)-D-ribulose 1-phosphate. Its pathway is amino-acid biosynthesis; L-methionine biosynthesis via salvage pathway; L-methionine from S-methyl-5-thio-alpha-D-ribose 1-phosphate: step 1/6. In terms of biological role, catalyzes the interconversion of methylthioribose-1-phosphate (MTR-1-P) into methylthioribulose-1-phosphate (MTRu-1-P). This chain is Methylthioribose-1-phosphate isomerase, found in Ajellomyces capsulatus (strain G186AR / H82 / ATCC MYA-2454 / RMSCC 2432) (Darling's disease fungus).